Here is a 174-residue protein sequence, read N- to C-terminus: Large ribosomal subunit protein uL6 (174 aa).

Belongs to the universal ribosomal protein uL6 family. In terms of assembly, part of the 50S ribosomal subunit.

Functionally, this protein binds to the 23S rRNA, and is important in its secondary structure. It is located near the subunit interface in the base of the L7/L12 stalk, and near the tRNA binding site of the peptidyltransferase center. The sequence is that of Large ribosomal subunit protein uL6 from Acidithiobacillus ferrooxidans (strain ATCC 23270 / DSM 14882 / CIP 104768 / NCIMB 8455) (Ferrobacillus ferrooxidans (strain ATCC 23270)).